Reading from the N-terminus, the 376-residue chain is Chaperone protein DnaJ (376 aa).

In terms of domain architecture, J spans 5 to 70 (DYYEILGVSK…QKRAAYDQYG (66 aa)). The segment at 131 to 209 (GVTKEIRIPT…CHGHGRVERS (79 aa)) adopts a CR-type zinc-finger fold. Residues cysteine 144, cysteine 147, cysteine 161, cysteine 164, cysteine 183, cysteine 186, cysteine 197, and cysteine 200 each contribute to the Zn(2+) site. CXXCXGXG motif repeat units follow at residues 144–151 (CDVCHGSG), 161–168 (CPTCHGSG), 183–190 (CPHCQGRG), and 197–204 (CNKCHGHG).

Belongs to the DnaJ family. In terms of assembly, homodimer. The cofactor is Zn(2+).

The protein localises to the cytoplasm. Functionally, participates actively in the response to hyperosmotic and heat shock by preventing the aggregation of stress-denatured proteins and by disaggregating proteins, also in an autonomous, DnaK-independent fashion. Unfolded proteins bind initially to DnaJ; upon interaction with the DnaJ-bound protein, DnaK hydrolyzes its bound ATP, resulting in the formation of a stable complex. GrpE releases ADP from DnaK; ATP binding to DnaK triggers the release of the substrate protein, thus completing the reaction cycle. Several rounds of ATP-dependent interactions between DnaJ, DnaK and GrpE are required for fully efficient folding. Also involved, together with DnaK and GrpE, in the DNA replication of plasmids through activation of initiation proteins. This is Chaperone protein DnaJ from Shigella boydii serotype 18 (strain CDC 3083-94 / BS512).